A 325-amino-acid polypeptide reads, in one-letter code: Ribose-phosphate pyrophosphokinase 4 (325 aa).

Residues Asp145 and His147 each coordinate Mg(2+). The binding of phosphoribosylpyrophosphate stretch occupies residues 228–243 (GRHVVIVDDLVQSGGT).

The protein belongs to the ribose-phosphate pyrophosphokinase family. Mg(2+) serves as cofactor.

It carries out the reaction D-ribose 5-phosphate + ATP = 5-phospho-alpha-D-ribose 1-diphosphate + AMP + H(+). The sequence is that of Ribose-phosphate pyrophosphokinase 4 from Oryza sativa subsp. japonica (Rice).